The sequence spans 64 residues: Cytochrome c oxidase subunit 2 (64 aa).

Topologically, residues 1–14 are mitochondrial intermembrane; that stretch reads MAHPSQLGFQDAAS. Residues 15 to 45 form a helical membrane-spanning segment; sequence PMMEELLHFHDHALMVVFLISTFVLYIILTM. Residues 46–64 are Mitochondrial matrix-facing; sequence LTTKLTDKLILESHEIEII.

Belongs to the cytochrome c oxidase subunit 2 family. As to quaternary structure, component of the cytochrome c oxidase (complex IV, CIV), a multisubunit enzyme composed of 14 subunits. The complex is composed of a catalytic core of 3 subunits MT-CO1, MT-CO2 and MT-CO3, encoded in the mitochondrial DNA, and 11 supernumerary subunits COX4I, COX5A, COX5B, COX6A, COX6B, COX6C, COX7A, COX7B, COX7C, COX8 and NDUFA4, which are encoded in the nuclear genome. The complex exists as a monomer or a dimer and forms supercomplexes (SCs) in the inner mitochondrial membrane with NADH-ubiquinone oxidoreductase (complex I, CI) and ubiquinol-cytochrome c oxidoreductase (cytochrome b-c1 complex, complex III, CIII), resulting in different assemblies (supercomplex SCI(1)III(2)IV(1) and megacomplex MCI(2)III(2)IV(2)). Found in a complex with TMEM177, COA6, COX18, COX20, SCO1 and SCO2. Interacts with TMEM177 in a COX20-dependent manner. Interacts with COX20. Interacts with COX16. Cu cation is required as a cofactor.

It is found in the mitochondrion inner membrane. The catalysed reaction is 4 Fe(II)-[cytochrome c] + O2 + 8 H(+)(in) = 4 Fe(III)-[cytochrome c] + 2 H2O + 4 H(+)(out). Its function is as follows. Component of the cytochrome c oxidase, the last enzyme in the mitochondrial electron transport chain which drives oxidative phosphorylation. The respiratory chain contains 3 multisubunit complexes succinate dehydrogenase (complex II, CII), ubiquinol-cytochrome c oxidoreductase (cytochrome b-c1 complex, complex III, CIII) and cytochrome c oxidase (complex IV, CIV), that cooperate to transfer electrons derived from NADH and succinate to molecular oxygen, creating an electrochemical gradient over the inner membrane that drives transmembrane transport and the ATP synthase. Cytochrome c oxidase is the component of the respiratory chain that catalyzes the reduction of oxygen to water. Electrons originating from reduced cytochrome c in the intermembrane space (IMS) are transferred via the dinuclear copper A center (CU(A)) of subunit 2 and heme A of subunit 1 to the active site in subunit 1, a binuclear center (BNC) formed by heme A3 and copper B (CU(B)). The BNC reduces molecular oxygen to 2 water molecules using 4 electrons from cytochrome c in the IMS and 4 protons from the mitochondrial matrix. The sequence is that of Cytochrome c oxidase subunit 2 (mt-co2) from Geophagus steindachneri (Red hump earth eater).